Here is a 265-residue protein sequence, read N- to C-terminus: Ubiquinone biosynthesis protein COQ4 homolog, mitochondrial (265 aa).

A mitochondrion-targeting transit peptide spans 1 to 30 (MATLLRPVLRRLCGLPGLQRPAAEMPLRAR). A Phosphoserine modification is found at Ser108. His163, Asp164, His167, and Glu179 together coordinate Zn(2+).

This sequence belongs to the COQ4 family. Component of a multi-subunit COQ enzyme complex, composed of at least COQ3, COQ4, COQ5, COQ6, COQ7 and COQ9. Zn(2+) serves as cofactor. In terms of tissue distribution, expressed ubiquitously, but at high levels in liver, lung and pancreas.

Its subcellular location is the mitochondrion inner membrane. The enzyme catalyses 4-hydroxy-3-methoxy-5-(all-trans-decaprenyl)benzoate + H(+) = 2-methoxy-6-(all-trans-decaprenyl)phenol + CO2. It functions in the pathway cofactor biosynthesis; ubiquinone biosynthesis. Its function is as follows. Lyase that catalyzes the C1-decarboxylation of 4-hydroxy-3-methoxy-5-(all-trans-decaprenyl)benzoic acid into 2-methoxy-6-(all-trans-decaprenyl)phenol during ubiquinone biosynthesis. The sequence is that of Ubiquinone biosynthesis protein COQ4 homolog, mitochondrial from Homo sapiens (Human).